Reading from the N-terminus, the 382-residue chain is ATP phosphoribosyltransferase regulatory subunit (382 aa).

This sequence belongs to the class-II aminoacyl-tRNA synthetase family. HisZ subfamily. Heteromultimer composed of HisG and HisZ subunits.

Its subcellular location is the cytoplasm. The protein operates within amino-acid biosynthesis; L-histidine biosynthesis; L-histidine from 5-phospho-alpha-D-ribose 1-diphosphate: step 1/9. In terms of biological role, required for the first step of histidine biosynthesis. May allow the feedback regulation of ATP phosphoribosyltransferase activity by histidine. The sequence is that of ATP phosphoribosyltransferase regulatory subunit from Burkholderia vietnamiensis (strain G4 / LMG 22486) (Burkholderia cepacia (strain R1808)).